Reading from the N-terminus, the 407-residue chain is Carbamoyl phosphate synthase small chain (407 aa).

The tract at residues 1–205 is CPSase; it reads MTETTPKTAP…LQDGYGEQDA (205 aa). S60, G257, and G259 together coordinate L-glutamine. Positions 209–397 constitute a Glutamine amidotransferase type-1 domain; that stretch reads HVVALDFGVK…INLIRERKGQ (189 aa). Catalysis depends on C286, which acts as the Nucleophile. L-glutamine contacts are provided by L287, Q290, N328, G330, and F331. Residues H370 and E372 contribute to the active site.

This sequence belongs to the CarA family. Composed of two chains; the small (or glutamine) chain promotes the hydrolysis of glutamine to ammonia, which is used by the large (or ammonia) chain to synthesize carbamoyl phosphate. Tetramer of heterodimers (alpha,beta)4.

The catalysed reaction is hydrogencarbonate + L-glutamine + 2 ATP + H2O = carbamoyl phosphate + L-glutamate + 2 ADP + phosphate + 2 H(+). The enzyme catalyses L-glutamine + H2O = L-glutamate + NH4(+). Its pathway is amino-acid biosynthesis; L-arginine biosynthesis; carbamoyl phosphate from bicarbonate: step 1/1. It functions in the pathway pyrimidine metabolism; UMP biosynthesis via de novo pathway; (S)-dihydroorotate from bicarbonate: step 1/3. Its function is as follows. Small subunit of the glutamine-dependent carbamoyl phosphate synthetase (CPSase). CPSase catalyzes the formation of carbamoyl phosphate from the ammonia moiety of glutamine, carbonate, and phosphate donated by ATP, constituting the first step of 2 biosynthetic pathways, one leading to arginine and/or urea and the other to pyrimidine nucleotides. The small subunit (glutamine amidotransferase) binds and cleaves glutamine to supply the large subunit with the substrate ammonia. The protein is Carbamoyl phosphate synthase small chain of Brucella abortus (strain S19).